The primary structure comprises 74 residues: Putative membrane protein insertion efficiency factor (74 aa).

Belongs to the UPF0161 family.

It localises to the cell inner membrane. In terms of biological role, could be involved in insertion of integral membrane proteins into the membrane. In Leptospira interrogans serogroup Icterohaemorrhagiae serovar copenhageni (strain Fiocruz L1-130), this protein is Putative membrane protein insertion efficiency factor.